A 408-amino-acid polypeptide reads, in one-letter code: Peptidoglycan muramidase Tse3 (408 aa).

Residues N181, D253, Q254, E258, E375, S378, R379, D382, and N384 each contribute to the Ca(2+) site.

As to quaternary structure, forms a heterotetramer with Tsi3 consisting of two Tse3 dimers and two Tsi3 dimers. Formation of the complex inactivates Tse3 enzymatic activity. Requires Ca(2+) as cofactor.

It localises to the host membrane. The protein localises to the secreted. It catalyses the reaction Hydrolysis of (1-&gt;4)-beta-linkages between N-acetylmuramic acid and N-acetyl-D-glucosamine residues in a peptidoglycan and between N-acetyl-D-glucosamine residues in chitodextrins.. With respect to regulation, enzymatic activity depends on membrane binding. Its function is as follows. Toxin secreted by the H1 type VI (H1-T6SS) secretion system into the periplasm of recipient cells. Degrades peptidoglycan via muramidase activity thereby helping itself to compete with other bacteria. To protect itself, the bacterium synthesizes immunity protein Tsi3 that specifically interacts with and inactivates cognate toxin. The protein is Peptidoglycan muramidase Tse3 of Pseudomonas aeruginosa (strain ATCC 15692 / DSM 22644 / CIP 104116 / JCM 14847 / LMG 12228 / 1C / PRS 101 / PAO1).